Here is a 62-residue protein sequence, read N- to C-terminus: Sperm protamine P1 (62 aa).

The disordered stretch occupies residues Met1 to Tyr62.

It belongs to the protamine P1 family. In terms of tissue distribution, testis.

The protein localises to the nucleus. Its subcellular location is the chromosome. Its function is as follows. Protamines substitute for histones in the chromatin of sperm during the haploid phase of spermatogenesis. They compact sperm DNA into a highly condensed, stable and inactive complex. This is Sperm protamine P1 (PRM1) from Thylogale stigmatica (Red-legged pademelon).